A 129-amino-acid chain; its full sequence is RxLR effector protein SFI6 (129 aa).

The N-terminal stretch at 1-16 (MTLVVLATGLLASGTA) is a signal peptide. Residues 42–64 (RFLRSHQITDDKVEINEHGEEER) carry the RxLR-dEER motif.

This sequence belongs to the RxLR effector family.

It is found in the secreted. Its subcellular location is the host cytoplasm. The protein resides in the host cell membrane. Effector that suppresses flg22-induced post-translational MAP kinase activation in tomato but not in Arabidopsis. The perception of highly conserved pathogen- or microbe-associated molecular patterns (PAMPs/MAMPs), such as flg22, triggers converging signaling pathways recruiting MAP kinase cascades and inducing transcriptional re-programming, yielding a generic antimicrobial response. This Phytophthora infestans (strain T30-4) (Potato late blight agent) protein is RxLR effector protein SFI6.